We begin with the raw amino-acid sequence, 490 residues long: Cytochrome P450 2C8 (490 aa).

Substrate contacts are provided by S100, N204, and R241. S100 is modified (phosphoserine). A heme-binding site is contributed by C435.

Belongs to the cytochrome P450 family. The cofactor is heme.

The protein resides in the endoplasmic reticulum membrane. Its subcellular location is the microsome membrane. It carries out the reaction an organic molecule + reduced [NADPH--hemoprotein reductase] + O2 = an alcohol + oxidized [NADPH--hemoprotein reductase] + H2O + H(+). It catalyses the reaction (5Z,8Z,11Z,14Z)-eicosatetraenoate + reduced [NADPH--hemoprotein reductase] + O2 = (11R,12S)-epoxy-(5Z,8Z,14Z)-eicosatrienoate + oxidized [NADPH--hemoprotein reductase] + H2O + H(+). The catalysed reaction is (5Z,8Z,11Z,14Z)-eicosatetraenoate + reduced [NADPH--hemoprotein reductase] + O2 = (11S,12R)-epoxy-(5Z,8Z,14Z)-eicosatrienoate + oxidized [NADPH--hemoprotein reductase] + H2O + H(+). The enzyme catalyses (5Z,8Z,11Z,14Z)-eicosatetraenoate + reduced [NADPH--hemoprotein reductase] + O2 = (14R,15S)-epoxy-(5Z,8Z,11Z)-eicosatrienoate + oxidized [NADPH--hemoprotein reductase] + H2O + H(+). It carries out the reaction (5Z,8Z,11Z,14Z)-eicosatetraenoate + reduced [NADPH--hemoprotein reductase] + O2 = (14S,15R)-epoxy-(5Z,8Z,11Z)-eicosatrienoate + oxidized [NADPH--hemoprotein reductase] + H2O + H(+). It catalyses the reaction (5Z,8Z,11Z,14Z,17Z)-eicosapentaenoate + reduced [NADPH--hemoprotein reductase] + O2 = 11,12-epoxy-(5Z,8Z,14Z,17Z)-eicosatetraenoate + oxidized [NADPH--hemoprotein reductase] + H2O + H(+). The catalysed reaction is (5Z,8Z,11Z,14Z,17Z)-eicosapentaenoate + reduced [NADPH--hemoprotein reductase] + O2 = 14,15-epoxy-(5Z,8Z,11Z,17Z)-eicosatetraenoate + oxidized [NADPH--hemoprotein reductase] + H2O + H(+). The enzyme catalyses (5Z,8Z,11Z,14Z,17Z)-eicosapentaenoate + reduced [NADPH--hemoprotein reductase] + O2 = (17R,18S)-epoxy-(5Z,8Z,11Z,14Z)-eicosatetraenoate + oxidized [NADPH--hemoprotein reductase] + H2O + H(+). It carries out the reaction (5Z,8Z,11Z,14Z,17Z)-eicosapentaenoate + reduced [NADPH--hemoprotein reductase] + O2 = (17S,18R)-epoxy-(5Z,8Z,11Z,14Z)-eicosatetraenoate + oxidized [NADPH--hemoprotein reductase] + H2O + H(+). It catalyses the reaction (4Z,7Z,10Z,13Z,16Z,19Z)-docosahexaenoate + reduced [NADPH--hemoprotein reductase] + O2 = (19R,20S)-epoxy-(4Z,7Z,10Z,13Z,16Z)-docosapentaenoate + oxidized [NADPH--hemoprotein reductase] + H2O + H(+). The catalysed reaction is (4Z,7Z,10Z,13Z,16Z,19Z)-docosahexaenoate + reduced [NADPH--hemoprotein reductase] + O2 = (19S,20R)-epoxy-(4Z,7Z,10Z,13Z,16Z)-docosapentaenoate + oxidized [NADPH--hemoprotein reductase] + H2O + H(+). The enzyme catalyses all-trans-retinoate + reduced [NADPH--hemoprotein reductase] + O2 = all-trans-4-hydroxyretinoate + oxidized [NADPH--hemoprotein reductase] + H2O + H(+). It carries out the reaction 17beta-estradiol + reduced [NADPH--hemoprotein reductase] + O2 = 16alpha,17beta-estriol + oxidized [NADPH--hemoprotein reductase] + H2O + H(+). It catalyses the reaction estrone + reduced [NADPH--hemoprotein reductase] + O2 = 16alpha-hydroxyestrone + oxidized [NADPH--hemoprotein reductase] + H2O + H(+). It functions in the pathway steroid metabolism. Its pathway is lipid metabolism; arachidonate metabolism. The protein operates within cofactor metabolism; retinol metabolism. Its function is as follows. A cytochrome P450 monooxygenase involved in the metabolism of various endogenous substrates, including fatty acids, steroid hormones and vitamins. Mechanistically, uses molecular oxygen inserting one oxygen atom into a substrate, and reducing the second into a water molecule, with two electrons provided by NADPH via cytochrome P450 reductase (NADPH--hemoprotein reductase). Primarily catalyzes the epoxidation of double bonds of polyunsaturated fatty acids (PUFA) with a preference for the last double bond. Catalyzes the hydroxylation of carbon-hydrogen bonds. Metabolizes all trans-retinoic acid toward its 4-hydroxylated form. Displays 16-alpha hydroxylase activity toward estrogen steroid hormones, 17beta-estradiol (E2) and estrone (E1). Plays a role in the oxidative metabolism of xenobiotics. It is the principal enzyme responsible for the metabolism of the anti-cancer drug paclitaxel (taxol). This chain is Cytochrome P450 2C8, found in Homo sapiens (Human).